The chain runs to 109 residues: uncharacterized protein (109 aa).

One can recognise an HTH hxlR-type domain in the interval 10–109; the sequence is APFEYTLSLI…WGMAQGGPHM (100 aa).

This is an uncharacterized protein from Bacillus subtilis (strain 168).